A 268-amino-acid chain; its full sequence is 4,5-DOPA dioxygenase extradiol (268 aa).

Positions 15, 53, 175, and 229 each coordinate Zn(2+).

The protein belongs to the DODA-type extradiol aromatic ring-opening dioxygenase family. Monomer. Requires Zn(2+) as cofactor.

The protein localises to the cytoplasm. It catalyses the reaction L-dopa + O2 = 4-(L-alanin-3-yl)-2-hydroxy-cis,cis-muconate 6-semialdehyde + H(+). The protein operates within pigment biosynthesis; betalain biosynthesis. In terms of biological role, opens the cyclic ring of dihydroxy-phenylalanine (DOPA) between carbons 4 and 5, thus producing an unstable seco-DOPA that rearranges nonenzymatically to betalamic acid. Produces mainly (S)-betalamic acid. The polypeptide is 4,5-DOPA dioxygenase extradiol (DODA) (Beta vulgaris (Sugar beet)).